Here is a 971-residue protein sequence, read N- to C-terminus: DNA-directed RNA polymerase subunit Rpo1N (971 aa).

The residue at position 1 (Met-1) is a Blocked amino end (Met). 8 residues coordinate Zn(2+): Cys-62, Cys-65, Cys-72, His-75, Cys-102, Cys-105, Cys-149, and Cys-152. Residues 185–204 are disordered; the sequence is SMQPDEDEDDAGVSPQELAE. 3 residues coordinate Mg(2+): Asp-527, Asp-529, and Asp-531. Residues 951–971 form a disordered region; it reads VEEPPTNLSEHGAAWEVESDD.

It belongs to the RNA polymerase beta' chain family. As to quaternary structure, part of the RNA polymerase complex. The cofactor is Mg(2+). Requires Zn(2+) as cofactor. Post-translationally, the N-terminus is blocked.

Its subcellular location is the cytoplasm. The catalysed reaction is RNA(n) + a ribonucleoside 5'-triphosphate = RNA(n+1) + diphosphate. In terms of biological role, DNA-dependent RNA polymerase (RNAP) catalyzes the transcription of DNA into RNA using the four ribonucleoside triphosphates as substrates. Forms the clamp head domain. The polypeptide is DNA-directed RNA polymerase subunit Rpo1N (Halobacterium salinarum (strain ATCC 29341 / DSM 671 / R1)).